Here is a 425-residue protein sequence, read N- to C-terminus: Trigger factor (425 aa).

Residues 163–248 (GDTAVIDFEG…IHEIKTKELP (86 aa)) form the PPIase FKBP-type domain.

The protein belongs to the FKBP-type PPIase family. Tig subfamily.

It localises to the cytoplasm. The catalysed reaction is [protein]-peptidylproline (omega=180) = [protein]-peptidylproline (omega=0). Functionally, involved in protein export. Acts as a chaperone by maintaining the newly synthesized protein in an open conformation. Functions as a peptidyl-prolyl cis-trans isomerase. In Bacillus mycoides (strain KBAB4) (Bacillus weihenstephanensis), this protein is Trigger factor.